Consider the following 338-residue polypeptide: Phenylalanine--tRNA ligase alpha subunit (338 aa).

Position 253 (glutamate 253) interacts with Mg(2+).

Belongs to the class-II aminoacyl-tRNA synthetase family. Phe-tRNA synthetase alpha subunit type 1 subfamily. As to quaternary structure, tetramer of two alpha and two beta subunits. Requires Mg(2+) as cofactor.

It is found in the cytoplasm. It carries out the reaction tRNA(Phe) + L-phenylalanine + ATP = L-phenylalanyl-tRNA(Phe) + AMP + diphosphate + H(+). The sequence is that of Phenylalanine--tRNA ligase alpha subunit from Legionella pneumophila (strain Lens).